A 437-amino-acid polypeptide reads, in one-letter code: Ribulose bisphosphate carboxylase-like protein (437 aa).

Lys176 functions as the Proton acceptor in the catalytic mechanism. 3 residues coordinate Mg(2+): Lys202, Asp204, and Glu205. An N6-carboxylysine modification is found at Lys202. The active-site Proton acceptor is His293.

This sequence belongs to the RuBisCO large chain family. Type IV subfamily. As to quaternary structure, homodimer. Requires Mg(2+) as cofactor.

May be involved in sulfur metabolism and oxidative stress response. Does not show RuBisCO activity. This is Ribulose bisphosphate carboxylase-like protein from Archaeoglobus fulgidus (strain ATCC 49558 / DSM 4304 / JCM 9628 / NBRC 100126 / VC-16).